The following is a 158-amino-acid chain: NAD(P)H-quinone oxidoreductase subunit J, chloroplastic (158 aa).

This sequence belongs to the complex I 30 kDa subunit family. As to quaternary structure, NDH is composed of at least 16 different subunits, 5 of which are encoded in the nucleus.

It is found in the plastid. The protein resides in the chloroplast thylakoid membrane. The enzyme catalyses a plastoquinone + NADH + (n+1) H(+)(in) = a plastoquinol + NAD(+) + n H(+)(out). The catalysed reaction is a plastoquinone + NADPH + (n+1) H(+)(in) = a plastoquinol + NADP(+) + n H(+)(out). NDH shuttles electrons from NAD(P)H:plastoquinone, via FMN and iron-sulfur (Fe-S) centers, to quinones in the photosynthetic chain and possibly in a chloroplast respiratory chain. The immediate electron acceptor for the enzyme in this species is believed to be plastoquinone. Couples the redox reaction to proton translocation, and thus conserves the redox energy in a proton gradient. This chain is NAD(P)H-quinone oxidoreductase subunit J, chloroplastic, found in Spinacia oleracea (Spinach).